A 673-amino-acid polypeptide reads, in one-letter code: Synaptotagmin-like protein 4 (673 aa).

The RabBD domain occupies 4 to 122 (ILDLSFLSEM…KATGDWFYDQ (119 aa)). The FYVE-type zinc-finger motif lies at 63–105 (CARCQEGLGRLIPKSSTCVGCNHLVCRECRVLESNGSWRCKVC). Positions 184–253 (FEVPKTRSGK…PGNQNAVCGD (70 aa)) are disordered. A phosphoserine mark is found at S202, S205, S218, S222, and S275. The C2 1 domain maps to 358–480 (VTGKIAFSLK…KLDKKLDHCL (123 aa)). A Phosphoserine modification is found at S490. In terms of domain architecture, C2 2 spans 509–635 (PASKLPVGGD…ISNGEVVDWM (127 aa)).

In terms of assembly, part of a ternary complex containing STX1A and RAB27A. Can bind both dominant negative and dominant active mutants of RAB27A. Binds STXBP1, RAB3A, RAB8A and RAB27B. Interacts with MYO5A. Detected in the pancreatic islet, in particular in insulin-positive beta cells, and in pituitary.

The protein localises to the membrane. Its subcellular location is the cytoplasmic vesicle. The protein resides in the secretory vesicle membrane. In terms of biological role, modulates exocytosis of dense-core granules and secretion of hormones in the pancreas and the pituitary. Interacts with vesicles containing negatively charged phospholipids in a Ca(2+)-independent manner. In Mus musculus (Mouse), this protein is Synaptotagmin-like protein 4 (Sytl4).